Consider the following 140-residue polypeptide: Putative pre-16S rRNA nuclease (140 aa).

It belongs to the YqgF nuclease family.

The protein localises to the cytoplasm. Functionally, could be a nuclease involved in processing of the 5'-end of pre-16S rRNA. The chain is Putative pre-16S rRNA nuclease from Aeromonas hydrophila subsp. hydrophila (strain ATCC 7966 / DSM 30187 / BCRC 13018 / CCUG 14551 / JCM 1027 / KCTC 2358 / NCIMB 9240 / NCTC 8049).